Consider the following 237-residue polypeptide: Ribosomal RNA small subunit methyltransferase G (237 aa).

S-adenosyl-L-methionine is bound by residues glycine 78, phenylalanine 83, 129 to 130 (AE), and arginine 148. Residues 218–237 (KKETPNKYPRKAGMPNKRPL) are disordered.

It belongs to the methyltransferase superfamily. RNA methyltransferase RsmG family.

It localises to the cytoplasm. Specifically methylates the N7 position of a guanine in 16S rRNA. This chain is Ribosomal RNA small subunit methyltransferase G, found in Streptococcus pneumoniae (strain JJA).